A 315-amino-acid chain; its full sequence is ATP synthase gamma chain (315 aa).

This sequence belongs to the ATPase gamma chain family. F-type ATPases have 2 components, CF(1) - the catalytic core - and CF(0) - the membrane proton channel. CF(1) has five subunits: alpha(3), beta(3), gamma(1), delta(1), epsilon(1). CF(0) has three main subunits: a, b and c.

It is found in the cellular thylakoid membrane. Produces ATP from ADP in the presence of a proton gradient across the membrane. The gamma chain is believed to be important in regulating ATPase activity and the flow of protons through the CF(0) complex. The sequence is that of ATP synthase gamma chain from Trichormus variabilis (strain ATCC 29413 / PCC 7937) (Anabaena variabilis).